The sequence spans 310 residues: 4-hydroxyproline 2-epimerase (310 aa).

C85 (proton acceptor) is an active-site residue. Substrate contacts are provided by residues 86–87 (GH), H205, and D231. The active-site Proton donor is C235. 236 to 237 (GT) is a substrate binding site.

Belongs to the proline racemase family.

The catalysed reaction is trans-4-hydroxy-L-proline = cis-4-hydroxy-D-proline. Catalyzes the epimerization of trans-4-hydroxy-L-proline (t4LHyp) to cis-4-hydroxy-D-proline (c4DHyp). May be involved in a degradation pathway of t4LHyp, which would allow L.aggregata to grow on t4LHyp as a sole carbon source. Displays no proline racemase activity. This is 4-hydroxyproline 2-epimerase from Roseibium aggregatum (strain ATCC 25650 / DSM 13394 / JCM 20685 / NBRC 16684 / NCIMB 2208 / IAM 12614 / B1) (Stappia aggregata).